A 199-amino-acid polypeptide reads, in one-letter code: Dephospho-CoA kinase (199 aa).

The 197-residue stretch at 3-199 (VLGLTGSIGM…AAAKMPRRRD (197 aa)) folds into the DPCK domain. 11 to 16 (GMGKST) provides a ligand contact to ATP.

This sequence belongs to the CoaE family.

Its subcellular location is the cytoplasm. It carries out the reaction 3'-dephospho-CoA + ATP = ADP + CoA + H(+). It functions in the pathway cofactor biosynthesis; coenzyme A biosynthesis; CoA from (R)-pantothenate: step 5/5. Functionally, catalyzes the phosphorylation of the 3'-hydroxyl group of dephosphocoenzyme A to form coenzyme A. The sequence is that of Dephospho-CoA kinase from Rhodopseudomonas palustris (strain ATCC BAA-98 / CGA009).